The sequence spans 718 residues: Polyribonucleotide nucleotidyltransferase (718 aa).

Mg(2+) is bound by residues D493 and D499. Positions 560–619 (PRMITIKINPEKIRDVIGKGGSVIRALTEETGTTIDISDDGVVTIASTSSEGMAEAKKRI) constitute a KH domain. Residues 629-697 (GQVYEGTVLK…EKGRVRLSAK (69 aa)) enclose the S1 motif domain.

This sequence belongs to the polyribonucleotide nucleotidyltransferase family. Mg(2+) serves as cofactor.

It is found in the cytoplasm. The enzyme catalyses RNA(n+1) + phosphate = RNA(n) + a ribonucleoside 5'-diphosphate. Involved in mRNA degradation. Catalyzes the phosphorolysis of single-stranded polyribonucleotides processively in the 3'- to 5'-direction. The polypeptide is Polyribonucleotide nucleotidyltransferase (Paraburkholderia phytofirmans (strain DSM 17436 / LMG 22146 / PsJN) (Burkholderia phytofirmans)).